Reading from the N-terminus, the 623-residue chain is DELLA protein RHT-1 (623 aa).

A disordered region spans residues 1–27 (MKREYQDAGGSGGGGGGMGSSEDKMMV). Over residues 9–19 (GGSGGGGGGMG) the composition is skewed to gly residues. The DELLA motif motif lies at 38-42 (DELLA). Disordered stretches follow at residues 109 to 138 (LNAPPPPLPPAPQLNASTSSTVTGSGGYFD) and 159 to 201 (AGAT…GARS). The span at 111–120 (APPPPLPPAP) shows a compositional bias: pro residues. Low complexity-rich tracts occupy residues 121–131 (QLNASTSSTVT) and 181–201 (GGSSTSSSSSSSSSLGGGARS). Residues 225–619 (VDTQEAGIRL…RPLIATSAWR (395 aa)) form the GRAS domain. A leucine repeat I (LRI) region spans residues 232–288 (IRLVHALLACAEAVQQENLSAAEALVKQIPLLAASQGGAMRKVAAYFGEALARRVFR). The LxCxE motif motif lies at 239 to 243 (LACAE). The interval 307-372 (HAHFYESCPY…GGPPSFRLTG (66 aa)) is VHIID. Positions 338–342 (VHVVD) match the VHIID motif. Positions 386–425 (QVGWKLAQFAHTIRVDFQYRGLVAATLADLEPFMLQPEGE) are leucine repeat II (LRII). A PFYRE region spans residues 435–540 (IAVNSVFEMH…EVYLGRQICN (106 aa)). An SAW region spans residues 543–619 (ACEGAERTER…RPLIATSAWR (77 aa)).

Belongs to the GRAS family. DELLA subfamily. Post-translationally, phosphorylated. Ubiquitinated. Upon GA application it is ubiquitinated, leading to its subsequent degradation.

It localises to the nucleus. In terms of biological role, probable transcriptional regulator that acts as a repressor of the gibberellin (GA) signaling pathway. Probably acts by participating in large multiprotein complexes that repress transcription of GA-inducible genes. Upon GA application, it is degraded by the proteasome, allowing the GA signaling pathway. The sequence is that of DELLA protein RHT-1 (RHT1) from Triticum aestivum (Wheat).